Here is a 328-residue protein sequence, read N- to C-terminus: Biotin synthase (328 aa).

The Radical SAM core domain occupies 51 to 282 (FNGNHVDLCS…DKIIRYAGGR (232 aa)). Cys-69, Cys-73, and Cys-76 together coordinate [4Fe-4S] cluster. [2Fe-2S] cluster is bound by residues Cys-112, Cys-147, Cys-207, and Arg-277.

The protein belongs to the radical SAM superfamily. Biotin synthase family. Homodimer. [4Fe-4S] cluster serves as cofactor. Requires [2Fe-2S] cluster as cofactor.

It carries out the reaction (4R,5S)-dethiobiotin + (sulfur carrier)-SH + 2 reduced [2Fe-2S]-[ferredoxin] + 2 S-adenosyl-L-methionine = (sulfur carrier)-H + biotin + 2 5'-deoxyadenosine + 2 L-methionine + 2 oxidized [2Fe-2S]-[ferredoxin]. It functions in the pathway cofactor biosynthesis; biotin biosynthesis; biotin from 7,8-diaminononanoate: step 2/2. Its function is as follows. Catalyzes the conversion of dethiobiotin (DTB) to biotin by the insertion of a sulfur atom into dethiobiotin via a radical-based mechanism. The protein is Biotin synthase of Clostridium acetobutylicum (strain ATCC 824 / DSM 792 / JCM 1419 / IAM 19013 / LMG 5710 / NBRC 13948 / NRRL B-527 / VKM B-1787 / 2291 / W).